A 170-amino-acid chain; its full sequence is Cathelicidin antimicrobial peptide (170 aa).

The signal sequence occupies residues 1–30 (MKTQRDGHSLGRWSLVLLLLGLVMPLAIIA). The propeptide at 31–131 (QVLSYKEAVL…DISCDKDNKR (101 aa)) is cathelin-like domain (CLD). 2 cysteine pairs are disulfide-bonded: C86–C97 and C108–C125. Residues 150-162 (FKRIVQRIKDFLR) form an active core region.

The protein belongs to the cathelicidin family. As to quaternary structure, monomer, homodimer or homotrimer (in vitro). Oligomerizes as tetra- or hexamer in solution (in vitro). In terms of processing, the N-terminus is blocked. Proteolytically cleaved by proteinase PRTN3 into antibacterial peptide LL-37. Proteolytically cleaved by cathepsin CTSG and neutrophil elastase ELANE. Post-translationally, resistant to proteolytic degradation in solution, and when bound to both zwitterionic (mimicking mammalian membranes) and negatively charged membranes (mimicking bacterial membranes). In terms of processing, after secretion onto the skin surface, the CAMP gene product is processed by a serine protease-dependent mechanism into multiple novel antimicrobial peptides distinct from and shorter than cathelicidin LL-37, such as peptides KR-20 (residues 151-170), LL-23 (residues 134-156), LL-29 (residues 134-162), KS-30 (residues 141-170), RK-31 (residues 140-170) and FF-33 (residues 138-170). The peptides act synergistically, killing bacteria at lower concentrations when present together, and maintain activity at increased salt condition. Expressed in neutrophilic granulocytes (at protein level). Expressed in bone marrow. In terms of tissue distribution, expressed in granulocytes (at protein level). Expressed by the eccrine apparatus and secreted into sweat on skin (at protein level). As to expression, expressed in bone marrow and testis.

It localises to the secreted. The protein localises to the vesicle. Antimicrobial protein that is an integral component of the innate immune system. Binds to bacterial lipopolysaccharides (LPS). Acts via neutrophil N-formyl peptide receptors to enhance the release of CXCL2. Postsecretory processing generates multiple cathelicidin antimicrobial peptides with various lengths which act as a topical antimicrobial defense in sweat on skin. The unprocessed precursor form, cathelicidin antimicrobial peptide, inhibits the growth of Gram-negative E.coli and E.aerogenes with efficiencies comparable to that of the mature peptide LL-37 (in vitro). Its function is as follows. Antimicrobial peptide that is an integral component of the innate immune system. Binds to bacterial lipopolysaccharides (LPS). Causes membrane permeabilization by forming transmembrane pores (in vitro). Causes lysis of E.coli. Exhibits antimicrobial activity against Gram-negative bacteria such as P.aeruginosa, S.typhimurium, E.aerogenes, E.coli and P.syringae, Gram-positive bacteria such as L.monocytogenes, S.epidermidis, S.pyogenes and S.aureus, as well as vancomycin-resistant enterococci (in vitro). Exhibits antimicrobial activity against methicillin-resistant S.aureus, P.mirabilis, and C.albicans in low-salt media, but not in media containing 100 mM NaCl (in vitro). Forms chiral supramolecular assemblies with quinolone signal (PQS) molecules of P.aeruginosa, which may lead to interference of bacterial quorum signaling and perturbance of bacterial biofilm formation. May form supramolecular fiber-like assemblies on bacterial membranes. Induces cytokine and chemokine production as well as TNF/TNFA and CSF2/GMCSF production in normal human keratinocytes. Exhibits hemolytic activity against red blood cells. Functionally, exhibits antimicrobial activity against E.coli and B.megaterium (in vitro). In terms of biological role, acts synergistically with peptides KS-30 and KR-31, killing bacteria such as S.aureus, E.coli and C.albicans at lower concentrations when present together, and maintains activity at increased salt condition. Does not have the ability to stimulate CXCL8/IL8 release from keratinocytes. Poorly active (MIC &gt; 150 uM) against E.coli strain K12. Is able to induce the pro-inflammatory cytokine TNF/TNFA or the chemokine CCL2/MCP1. Its function is as follows. Moderately antibacterial. Functionally, moderately antibacterial. Acts synergistically with peptides KR-20 and KR-31, killing bacteria such as S.aureus, E.coli and C.albicans at lower concentrations when present together, and maintain activity at increased salt condition. Does not have the ability to stimulate CXCL8/IL8 release from keratinocytes. In terms of biological role, acts synergistically with peptides KS-30 and KR-31, killing bacteria such as S.aureus, E.coli and C.albicans at lower concentrations when present together, and maintain activity at increased salt condition. Does not have the ability to stimulate CXCL8/IL8 release from keratinocytes. Inhibits the growth of E.coli and B.megaterium and exhibits hemolytic activity against human red blood cells. The sequence is that of Cathelicidin antimicrobial peptide from Homo sapiens (Human).